Here is a 1161-residue protein sequence, read N- to C-terminus: MFVVDLSLSGNMRSLTHGKSIHRSSIVVVTHCSHRLSLSPLNRPALFPSHSDRYTVPWRCRPSSWRLWITFVCLLTLHMFGLSSAVKRDGEVPTANLRASLSPDSSKEDAMLLSAIGGIGPTESRLQHIPFRTTRYLPIRSHVLQSTVERIESPEALNEVPTKVERNEFTEKGDKTEQVLTAQADHKSLLEGRSESTSTAPDDDFDFLFEDDTPKKPKSRVNKGTSSDETSPGDRSSGEGSSASDSLLSVVHRTKGNATQANKNQKRITHPKSKAQHQKKVTKKQGIPGSDSLGTSSADFDFDIDSSSNTQADDSQRQSLGDSSALDLFGSDTGDTGDIFGFSNSSSDGGNAAANDGGLFSSSGMGPTGASDETSANPLGSILGGVLNPFAQQQSITPMTDKADEWSKENMKAFEEKMPKKMRDDGSPDSWYKQAVPQESVADLNRMRENRRIAEENRAAAPLSAVYTKATKTVPAINYLGAGYDHVRGNPVGDPSSMGDPGIRPPVLRFTYAQNEDGVSNDLTVLQPLGGYVRQYVACRQSETISELSNLSDYQNELSVDASLQGGDPIGLNSFSASTGYRDFAKEVSKKDTRTYMLKNYCMRYEAGVAQSNHLKWNVTLAFAAGVSQLPDVFDAHNPECACSAEQWRQDQNAEACTKTNVPIWISFIEQFGTHFLVRLFAGGKMTYQVTAKRSEVEKMRNMGIDVKTQLKMQLGGVSGGAGQGTSSKKNQSSSEYQMNVQKETLVIGGRPPGNVSDPAALAAWADTVEELPMPVKFEVQPLYHLLPVEKQEAFKQAVTFYSKAVGLTPQDLSALTGVTRNLPKQLTQATQVAWSGPPPGFAKCPAGQVVILGFAMHLNFKEPGTDNFRIISCPPGREKCDGVGTASSETDEGRIYILCGEEPINEIQQVVAESPAHAGASVLEASCPDETVVVGGFGISVRGGSDGLDSFSIESCTTGQTICTKAPTRGSEKNFLWMMCVDKQYPGLRELVNVAELGSHGNANKRAVNSDGNVDVKCPANSSIVLGYVMEAHTNMQFVRDKFLQCPENASECKMTGKGVDHGMLWLFDRHALFGWIICKTVNEPAMHVATDVGKAKGNGKKKKGKKGKNKTNAPNEVEEGQQLGADSPSQVSVPADADSGPTSKTMSSLKLAPVKLLDL.

The helical transmembrane segment at 67-86 (LWITFVCLLTLHMFGLSSAV) threads the bilayer. Residues 154-329 (PEALNEVPTK…LGDSSALDLF (176 aa)) form a disordered region. Composition is skewed to basic and acidic residues over residues 162–177 (TKVE…DKTE) and 184–194 (ADHKSLLEGRS). A compositionally biased stretch (acidic residues) spans 201–211 (PDDDFDFLFED). The span at 222–234 (NKGTSSDETSPGD) shows a compositional bias: polar residues. Residues 238–249 (GEGSSASDSLLS) are compositionally biased toward low complexity. Asparagine 257 carries an N-linked (GlcNAc...) asparagine glycan. A compositionally biased stretch (basic residues) spans 264 to 283 (NQKRITHPKSKAQHQKKVTK). Residues 309-322 (NTQADDSQRQSLGD) show a composition bias toward polar residues. Asparagine 344 carries N-linked (GlcNAc...) asparagine glycosylation. The interval 353–381 (AANDGGLFSSSGMGPTGASDETSANPLGS) is disordered. The segment covering 361–378 (SSSGMGPTGASDETSANP) has biased composition (polar residues). In terms of domain architecture, MACPF spans 463–817 (LSAVYTKATK…LTPQDLSALT (355 aa)). A disulfide bond links cysteine 539 and cysteine 602. The N-linked (GlcNAc...) asparagine glycan is linked to asparagine 550. Residues 554-589 (YQNELSVDASLQGGDPIGLNSFSASTGYRDFAKEVS) traverse the membrane as a beta stranded segment. The N-linked (GlcNAc...) asparagine glycan is linked to asparagine 618. A disulfide bridge connects residues cysteine 643 and cysteine 657. Residues 694 to 740 (RSEVEKMRNMGIDVKTQLKMQLGGVSGGAGQGTSSKKNQSSSEYQMN) traverse the membrane as a beta stranded segment. The tract at residues 716-736 (GGVSGGAGQGTSSKKNQSSSE) is disordered. The N-linked (GlcNAc...) asparagine glycan is linked to asparagine 755. Cystine bridges form between cysteine 845/cysteine 900, cysteine 874/cysteine 881, cysteine 928/cysteine 981, cysteine 957/cysteine 964, cysteine 1019/cysteine 1080, and cysteine 1047/cysteine 1054. Residues asparagine 1022, asparagine 1050, and asparagine 1111 are each glycosylated (N-linked (GlcNAc...) asparagine). The tract at residues 1094-1149 (VGKAKGNGKKKKGKKGKNKTNAPNEVEEGQQLGADSPSQVSVPADADSGPTSKTMS) is disordered. Over residues 1099-1111 (GNGKKKKGKKGKN) the composition is skewed to basic residues.

This sequence belongs to the MPEG1 family. Homooligomer; forms a homooligomeric pore.

Its subcellular location is the parasitophorous vacuole membrane. The protein resides in the cytoplasmic vesicle. The protein localises to the secretory vesicle. It is found in the microneme membrane. Pore-forming protein that promotes parasite exit from host cells: mediates formation of a pore in the parasitophorous vacuolar membrane, leading to membrane permeabilization, thereby facilitating parasite egress from host cells. May also form a pore in the host plasma membrane. Preferentially binds inner leaflet lipids, such as phosphatidylethanolamine (PE) or phosphatidylserine (PS). The polypeptide is Perforin-like protein 1 (Toxoplasma gondii (strain ATCC 50861 / VEG)).